Consider the following 238-residue polypeptide: Thrombin-like enzyme collinein-1 (238 aa).

The 229-residue stretch at 1–229 folds into the Peptidase S1 domain; the sequence is VIGGDECNIN…HLDWIQNIIA (229 aa). Cystine bridges form between Cys-7–Cys-141, Cys-28–Cys-44, Cys-78–Cys-236, Cys-120–Cys-190, Cys-152–Cys-169, and Cys-180–Cys-205. Residues His-43 and Asp-88 each act as charge relay system in the active site. The active-site Charge relay system is the Ser-184.

Belongs to the peptidase S1 family. Snake venom subfamily. Monomer. In terms of tissue distribution, expressed by the venom gland.

The protein localises to the secreted. Inhibited by Cu(2+) and, to a lesser extent, by Zn(2+) and Ba(2+). Not inhibited by Ca(2+) and Mg(2+). Functionally, thrombin-like snake venom serine protease. Releases fibrinopeptide A and B in the conversion of fibrinogen to fibrin, with preferential activity on the alpha chain of fibrinogen. Also hydrolyzes N-p-toluensulfonyl arginine ester (TAME) and chromogenic artificial substrates of the blood coagulation cascade: S-2222 for factor Xa, S-2302 for kallikrein and S-2238 for thrombin. When tested in vitro, the recombinant protein does not degrade blood clots, suggesting that this toxin lacks fibrinolytic activity. In addition, it moderately inhibits human Kv10.1/KCNH1/EAG1 currents, with a mechanism independent of its enzymatic activity. It selectively blocks Kv10.1/KCNH1/EAG1 in a time and dose-dependent manner (IC(50)=4.2 uM for native protein and IC(50)=2.5 uM for recombinant protein). It may have a preference in interacting with Kv10.1/KCNH1/EAG1 in its closed state, since the inhibitory effect of the toxin is decreased at more depolarized potentials. Corroboratively, it may have possible antitumor applications, since it reduces the viability of human breast cancer cell line MCF-7, which strongly expresses Kv10.1/KCNH1/EAG1, but does not affect the liver carcinoma and the non-tumorigenic epithelial breast cell lines, which weakly express Kv10.1/KCNH1/EAG1. When tested on peripheral blood mononuclear cells (PBMC), the native protein shows mild cytotoxicity, whereas the recombinant protein does not show any cytotoxicity. Native form is not immununogenic, since it does not induce statistically significant antibody production in mice, whereas recombinant form shows an antibody titer slightly higher than the native form. In vivo, subplantar injection in mice paw induces a discreet paw edema. In addition, intraperitoneal injection of the recombinant protein into mice led to fibrinogen depletion, resulting in the blood incoagulability. The chain is Thrombin-like enzyme collinein-1 from Crotalus durissus collilineatus (Brazilian rattlesnake).